We begin with the raw amino-acid sequence, 524 residues long: Indoleacetamide hydrolase (524 aa).

Basic residues-rich tracts occupy residues 1–26 and 34–54; these read MAKKTASKKKSVSRKVTKTSSKKATA and AAKKSVKKAAPRKSATARRPK. Residues 1–56 form a disordered region; that stretch reads MAKKTASKKKSVSRKVTKTSSKKATARKGAVAKAAKKSVKKAAPRKSATARRPKGP. Active-site charge relay system residues include K133 and S208. S232 functions as the Acyl-ester intermediate in the catalytic mechanism.

It belongs to the amidase family.

It functions in the pathway plant hormone metabolism; auxin biosynthesis. In terms of biological role, hydrolyzes indole-3-acetamide (IAM) into indole-3-acetic acid (IAA). This Bradyrhizobium diazoefficiens (strain JCM 10833 / BCRC 13528 / IAM 13628 / NBRC 14792 / USDA 110) protein is Indoleacetamide hydrolase (bam).